A 544-amino-acid chain; its full sequence is Chaperonin GroEL (544 aa).

ATP contacts are provided by residues 30–33 (TLGP), Lys51, 87–91 (DGTTT), Gly415, and Asp495.

It belongs to the chaperonin (HSP60) family. As to quaternary structure, forms a cylinder of 14 subunits composed of two heptameric rings stacked back-to-back. Interacts with the co-chaperonin GroES.

It is found in the cytoplasm. It catalyses the reaction ATP + H2O + a folded polypeptide = ADP + phosphate + an unfolded polypeptide.. Together with its co-chaperonin GroES, plays an essential role in assisting protein folding. The GroEL-GroES system forms a nano-cage that allows encapsulation of the non-native substrate proteins and provides a physical environment optimized to promote and accelerate protein folding. In Aeromonas salmonicida (strain A449), this protein is Chaperonin GroEL.